The primary structure comprises 432 residues: D-amino acid dehydrogenase (432 aa).

An FAD-binding site is contributed by 3 to 17 (VVILGSGVVGVASAW).

Belongs to the DadA oxidoreductase family. Requires FAD as cofactor.

The enzyme catalyses a D-alpha-amino acid + A + H2O = a 2-oxocarboxylate + AH2 + NH4(+). The protein operates within amino-acid degradation; D-alanine degradation; NH(3) and pyruvate from D-alanine: step 1/1. Oxidative deamination of D-amino acids. In Escherichia coli O45:K1 (strain S88 / ExPEC), this protein is D-amino acid dehydrogenase.